Here is a 150-residue protein sequence, read N- to C-terminus: 6,7-dimethyl-8-ribityllumazine synthase (150 aa).

Residues phenylalanine 11, 43–45 (TYE), and 67–69 (AVI) each bind 5-amino-6-(D-ribitylamino)uracil. 72-73 (AT) contacts (2S)-2-hydroxy-3-oxobutyl phosphate. Histidine 75 serves as the catalytic Proton donor. Leucine 100 serves as a coordination point for 5-amino-6-(D-ribitylamino)uracil. Position 115 (arginine 115) interacts with (2S)-2-hydroxy-3-oxobutyl phosphate.

It belongs to the DMRL synthase family.

The catalysed reaction is (2S)-2-hydroxy-3-oxobutyl phosphate + 5-amino-6-(D-ribitylamino)uracil = 6,7-dimethyl-8-(1-D-ribityl)lumazine + phosphate + 2 H2O + H(+). It functions in the pathway cofactor biosynthesis; riboflavin biosynthesis; riboflavin from 2-hydroxy-3-oxobutyl phosphate and 5-amino-6-(D-ribitylamino)uracil: step 1/2. In terms of biological role, catalyzes the formation of 6,7-dimethyl-8-ribityllumazine by condensation of 5-amino-6-(D-ribitylamino)uracil with 3,4-dihydroxy-2-butanone 4-phosphate. This is the penultimate step in the biosynthesis of riboflavin. This is 6,7-dimethyl-8-ribityllumazine synthase from Staphylothermus marinus (strain ATCC 43588 / DSM 3639 / JCM 9404 / F1).